Consider the following 171-residue polypeptide: Replication restart protein PriC (171 aa).

Belongs to the PriC family. As to quaternary structure, monomer. Component of the replication restart primosome, which is composed of PriA, PriB, PriC, DnaBe and DnaT; DnaG primase associates transiently with this complex. Interacts with the C-terminus of SSB. SSB interaction is required to load the main replicative helicase onto substrate replication forks. Interacts with helicase DnaB alone and in the DnaB-DnaC complex, probably 1:1 binding with DnaB.

Involved in the restart of stalled replication forks, which reloads the DnaB replicative helicase on sites other than the origin of replication. In vitro can load (E.coli) DnaB replicative helicase from a DnaB-DnaC complex on a single-stranded DNA (ssDNA)-binding protein (SSB)-coated stalled replication fork with no leading- or lagging-strand in the absence of other primosome proteins (PriA, PriB or DnaT). Binds SSB (tested with E.coli protein) and ssDNA. Complements priC in an E.coli priB-priC double deletion. The protein is Replication restart protein PriC of Cronobacter sakazakii (strain ATCC BAA-894) (Enterobacter sakazakii).